Reading from the N-terminus, the 155-residue chain is Endoribonuclease YbeY (155 aa).

Zn(2+)-binding residues include H114, H118, and H124.

It belongs to the endoribonuclease YbeY family. Zn(2+) serves as cofactor.

It localises to the cytoplasm. In terms of biological role, single strand-specific metallo-endoribonuclease involved in late-stage 70S ribosome quality control and in maturation of the 3' terminus of the 16S rRNA. In Escherichia coli O157:H7, this protein is Endoribonuclease YbeY.